We begin with the raw amino-acid sequence, 493 residues long: Alpha-amylase-related protein (493 aa).

Positions 1–19 are cleaved as a signal peptide; the sequence is MFKFALALTLCLAGSLSLA. Gln20 carries the pyrrolidone carboxylic acid modification. Cys47 and Cys103 are disulfide-bonded. Positions 117, 168, and 177 each coordinate Ca(2+). Cys156 and Cys170 are oxidised to a cystine. Arg205 is a binding site for chloride. Residue Asp207 is the Nucleophile of the active site. His211 contributes to the Ca(2+) binding site. The active-site Proton donor is Glu244. Chloride is bound by residues Asn307 and Arg342. 3 disulfides stabilise this stretch: Cys375-Cys381, Cys417-Cys440, and Cys447-Cys459.

Belongs to the glycosyl hydrolase 13 family. Monomer. Requires Ca(2+) as cofactor. Chloride serves as cofactor.

Its subcellular location is the secreted. It catalyses the reaction Endohydrolysis of (1-&gt;4)-alpha-D-glucosidic linkages in polysaccharides containing three or more (1-&gt;4)-alpha-linked D-glucose units.. In Drosophila elegans (Fruit fly), this protein is Alpha-amylase-related protein (Amyrel).